A 39-amino-acid chain; its full sequence is Large ribosomal subunit protein bL36 (39 aa).

This sequence belongs to the bacterial ribosomal protein bL36 family.

The protein is Large ribosomal subunit protein bL36 of Pediococcus pentosaceus (strain ATCC 25745 / CCUG 21536 / LMG 10740 / 183-1w).